Reading from the N-terminus, the 447-residue chain is Eukaryotic translation initiation factor 3 subunit E (447 aa).

The PCI domain occupies 253 to 421 (LELFFNAGYI…GTVVMNHPPS (169 aa)).

The protein belongs to the eIF-3 subunit E family. As to quaternary structure, component of the eukaryotic translation initiation factor 3 (eIF-3) complex.

The protein localises to the cytoplasm. In terms of biological role, component of the eukaryotic translation initiation factor 3 (eIF-3) complex, which is involved in protein synthesis of a specialized repertoire of mRNAs and, together with other initiation factors, stimulates binding of mRNA and methionyl-tRNAi to the 40S ribosome. The eIF-3 complex specifically targets and initiates translation of a subset of mRNAs involved in cell proliferation. This Chaetomium globosum (strain ATCC 6205 / CBS 148.51 / DSM 1962 / NBRC 6347 / NRRL 1970) (Soil fungus) protein is Eukaryotic translation initiation factor 3 subunit E.